The chain runs to 201 residues: 3-isopropylmalate dehydratase small subunit (201 aa).

The protein belongs to the LeuD family. LeuD type 1 subfamily. As to quaternary structure, heterodimer of LeuC and LeuD.

The enzyme catalyses (2R,3S)-3-isopropylmalate = (2S)-2-isopropylmalate. The protein operates within amino-acid biosynthesis; L-leucine biosynthesis; L-leucine from 3-methyl-2-oxobutanoate: step 2/4. Functionally, catalyzes the isomerization between 2-isopropylmalate and 3-isopropylmalate, via the formation of 2-isopropylmaleate. This chain is 3-isopropylmalate dehydratase small subunit, found in Sinorhizobium fredii (strain NBRC 101917 / NGR234).